Reading from the N-terminus, the 218-residue chain is PKHD-type hydroxylase IL0759 (218 aa).

The Fe2OG dioxygenase domain occupies 76–170 (QVARVTINRY…RLAMIGWVQS (95 aa)). Residues histidine 94, aspartate 96, and histidine 151 each contribute to the Fe cation site. A 2-oxoglutarate-binding site is contributed by arginine 161.

Fe(2+) is required as a cofactor. It depends on L-ascorbate as a cofactor.

The polypeptide is PKHD-type hydroxylase IL0759 (Idiomarina loihiensis (strain ATCC BAA-735 / DSM 15497 / L2-TR)).